A 270-amino-acid chain; its full sequence is Urease accessory protein UreD (270 aa).

Belongs to the UreD family. As to quaternary structure, ureD, UreF and UreG form a complex that acts as a GTP-hydrolysis-dependent molecular chaperone, activating the urease apoprotein by helping to assemble the nickel containing metallocenter of UreC. The UreE protein probably delivers the nickel.

It localises to the cytoplasm. Functionally, required for maturation of urease via the functional incorporation of the urease nickel metallocenter. The chain is Urease accessory protein UreD from Synechocystis sp. (strain ATCC 27184 / PCC 6803 / Kazusa).